The following is a 167-amino-acid chain: Large ribosomal subunit protein uL10 (167 aa).

Belongs to the universal ribosomal protein uL10 family. Part of the ribosomal stalk of the 50S ribosomal subunit. The N-terminus interacts with L11 and the large rRNA to form the base of the stalk. The C-terminus forms an elongated spine to which L12 dimers bind in a sequential fashion forming a multimeric L10(L12)X complex.

Forms part of the ribosomal stalk, playing a central role in the interaction of the ribosome with GTP-bound translation factors. This Lactiplantibacillus plantarum (strain ATCC BAA-793 / NCIMB 8826 / WCFS1) (Lactobacillus plantarum) protein is Large ribosomal subunit protein uL10.